Consider the following 541-residue polypeptide: Zinc finger protein 513 (541 aa).

The disordered stretch occupies residues 1-118 (MPRRKQSHPQ…GEARGERPGP (118 aa)). The span at 44-57 (LEFEEEEEEEEGDG) shows a compositional bias: acidic residues. Ser85 and Ser96 each carry phosphoserine. Residues 103–115 (EPARGPGEARGER) show a composition bias toward basic and acidic residues. C2H2-type zinc fingers lie at residues 150–172 (YSCRLCTFVSHYSSHLKRHMQTH), 178–200 (FRCGRCPYASAQLVNLTRHTRTH), 206–228 (YRCPHCPFACSSLGNLRRHQRTH), 360–382 (FACSLCPFATHYPNHLARHMKTH), 388–410 (FRCARCPYASAHLDNLKRHQRVH), 416–438 (YKCPLCPYACGNLANLKRHGRIH), 444–466 (FRCSLCNYSCNQSMNLKRHMLRH), and 472–494 (FRCATCAYTTGHWDNYKRHQKVH). The tract at residues 492-541 (KVHGHGGAGGPGLSASEGWAPPHSPPSVLSSRGPPALGTAGSRAVHTDSS) is disordered.

This sequence belongs to the krueppel C2H2-type zinc-finger protein family. In terms of assembly, binds DNA. Can associate with the proximal promoter regions of PAX6 and SP4, and their known targets including ARR3, RHO, OPN1MW2 and OPN1SW. As to expression, in the retina, expressed in the outer and inner nuclear layers, and the ganglion cell layer.

The protein resides in the nucleus. Its function is as follows. Transcriptional regulator that plays a role in retinal development and maintenance. In Homo sapiens (Human), this protein is Zinc finger protein 513 (ZNF513).